The sequence spans 637 residues: 1-deoxy-D-xylulose-5-phosphate synthase (637 aa).

Thiamine diphosphate-binding positions include histidine 71 and 112–114 (SHA). Aspartate 144 serves as a coordination point for Mg(2+). Residues 145 to 146 (GA), asparagine 173, tyrosine 284, and glutamate 365 contribute to the thiamine diphosphate site. Asparagine 173 contacts Mg(2+).

This sequence belongs to the transketolase family. DXPS subfamily. As to quaternary structure, homodimer. The cofactor is Mg(2+). It depends on thiamine diphosphate as a cofactor.

It carries out the reaction D-glyceraldehyde 3-phosphate + pyruvate + H(+) = 1-deoxy-D-xylulose 5-phosphate + CO2. The protein operates within metabolic intermediate biosynthesis; 1-deoxy-D-xylulose 5-phosphate biosynthesis; 1-deoxy-D-xylulose 5-phosphate from D-glyceraldehyde 3-phosphate and pyruvate: step 1/1. In terms of biological role, catalyzes the acyloin condensation reaction between C atoms 2 and 3 of pyruvate and glyceraldehyde 3-phosphate to yield 1-deoxy-D-xylulose-5-phosphate (DXP). This chain is 1-deoxy-D-xylulose-5-phosphate synthase, found in Mycolicibacterium vanbaalenii (strain DSM 7251 / JCM 13017 / BCRC 16820 / KCTC 9966 / NRRL B-24157 / PYR-1) (Mycobacterium vanbaalenii).